A 132-amino-acid chain; its full sequence is Small ribosomal subunit protein uS11 (132 aa).

Belongs to the universal ribosomal protein uS11 family. Part of the 30S ribosomal subunit. Interacts with proteins S7 and S18. Binds to IF-3.

Located on the platform of the 30S subunit, it bridges several disparate RNA helices of the 16S rRNA. Forms part of the Shine-Dalgarno cleft in the 70S ribosome. The protein is Small ribosomal subunit protein uS11 of Dichelobacter nodosus (strain VCS1703A).